The sequence spans 714 residues: MALTAALKAQIAAWYKALQDQIPDFIPRAPQRQMIADVARTLAGEEGRHLAIEAPTGVGKTLSYLIPGIAIAREEQKTLVVSTANVALQDQIFSKDLPLLRKIIPDLRFTAAFGRGRYVCPRNLAALASSEPTQQDLLAFLDDELTPNNQEEQKRCARLKGDLDGYKWDGLRDHTDIAIDDDLWRRLSTDKASCLNRNCHYYRECPFFVARREIQEAEVVVANHALVMAAMESEAVLPEPKHLLLVLDEGHHLPDVARDALEMSAEITASWYRLQLDLFSKLVATCMEQFRPKTTPPLANPERLNAHCEEVYELIASLNAILNLYMPAAQEAEHRFAMGELPDEVMEICQRLAKLTETLRGLAESFLNDLSEKTGSHDIMRLHRVILQMNRALGMFEAQSKLWRLASMAQSSGAPVSKWATREIREGQLHVWFHCVGIRVSEQLERLLWCSVPHIIVTSATLRSLNSFSRLQEMSGLKEKAGDRFVALDSPFNHVEQGKLVIPQMRYEPTIDNEEQHIAEMAAYFREQLESKKHHGMLVLFASGRAMQRFLEHVADVRLLLLVQGDQPRYRLVELHRKRVESGERSVLVGLQSFAEGLDLKGELLTQVHIHKIAFPPIDSPVVITEGEWLKSLNRYPFEVQSLPSASFNLIQQVGRLIRSHACRGEVVIYDKRLLTKNYGQRLLNALPVFPIEQPAVPDVIVKPKAKPARRRRR.

One can recognise a Helicase ATP-binding domain in the interval 17–294 (ALQDQIPDFI…TCMEQFRPKT (278 aa)). 54-61 (APTGVGKT) lines the ATP pocket. Residues Cys120, Cys194, Cys199, and Cys205 each coordinate [4Fe-4S] cluster. The short motif at 248-251 (DEGH) is the DEAH box element. Positions 517–698 (HIAEMAAYFR…VFPIEQPAVP (182 aa)) constitute a Helicase C-terminal domain.

This sequence belongs to the helicase family. DinG subfamily. Type 1 sub-subfamily. Requires [4Fe-4S] cluster as cofactor.

The enzyme catalyses Couples ATP hydrolysis with the unwinding of duplex DNA at the replication fork by translocating in the 5'-3' direction. This creates two antiparallel DNA single strands (ssDNA). The leading ssDNA polymer is the template for DNA polymerase III holoenzyme which synthesizes a continuous strand.. It catalyses the reaction ATP + H2O = ADP + phosphate + H(+). DNA-dependent ATPase and 5'-3' DNA helicase. Unwinds D-loops, R-loops, forked DNA and G-quadruplex DNA. In Salmonella paratyphi A (strain ATCC 9150 / SARB42), this protein is ATP-dependent DNA helicase DinG.